The following is a 67-amino-acid chain: Large ribosomal subunit protein uL29 (67 aa).

The protein belongs to the universal ribosomal protein uL29 family.

This chain is Large ribosomal subunit protein uL29, found in Methanosarcina acetivorans (strain ATCC 35395 / DSM 2834 / JCM 12185 / C2A).